The following is an 86-amino-acid chain: Putative regulatory protein OB1501 (86 aa).

Belongs to the RemA family.

The chain is Putative regulatory protein OB1501 from Oceanobacillus iheyensis (strain DSM 14371 / CIP 107618 / JCM 11309 / KCTC 3954 / HTE831).